The primary structure comprises 450 residues: tRNA modification GTPase MnmE (450 aa).

Positions 23, 79, and 118 each coordinate (6S)-5-formyl-5,6,7,8-tetrahydrofolate. Residues 214-374 (GITLILVGKP…LKEHILNKVG (161 aa)) enclose the TrmE-type G domain. Asn-224 provides a ligand contact to K(+). Residues 224–229 (NAGKSS), 243–249 (TSIAGTT), and 268–271 (DTAG) each bind GTP. Ser-228 contributes to the Mg(2+) binding site. Residues Thr-243, Ile-245, and Thr-248 each coordinate K(+). Thr-249 is a binding site for Mg(2+). Lys-450 provides a ligand contact to (6S)-5-formyl-5,6,7,8-tetrahydrofolate.

It belongs to the TRAFAC class TrmE-Era-EngA-EngB-Septin-like GTPase superfamily. TrmE GTPase family. Homodimer. Heterotetramer of two MnmE and two MnmG subunits. Requires K(+) as cofactor.

The protein resides in the cytoplasm. Functionally, exhibits a very high intrinsic GTPase hydrolysis rate. Involved in the addition of a carboxymethylaminomethyl (cmnm) group at the wobble position (U34) of certain tRNAs, forming tRNA-cmnm(5)s(2)U34. The polypeptide is tRNA modification GTPase MnmE (Francisella tularensis subsp. tularensis (strain FSC 198)).